The chain runs to 650 residues: NAC domain-containing protein 54 (650 aa).

Positions 6-156 constitute an NAC domain; that stretch reads LPPGFRFHPT…AYALCRVFKK (151 aa). The DNA-binding element occupies 105–162; the sequence is VGMKKTLVYYRGRAPHGSRTDWVMHEYRLDERECETDTGLQDAYALCRVFKKTAPGPK.

Expressed in leaves, roots and flowers.

The protein resides in the nucleus. Transcription factor that functions as a regulator of the jasmonate (JA) signaling pathway. May regulate the expression of genes encoding JA biosynthetic enzymes, such as lipoxygenase 7 (CM-LOX1), allene oxide synthase 2 (AOS2) and OPDA reductase 7 (OPR7). Involved in abscisic acid-induced leaf senescence. Activates the abscisic acid (ABA) signaling-associated gene ABI5 and the senescence-associated gene NYC1 by directly binding to the mitochondrial dysfunction motif (MDM) present in their promoters. Possesses transcriptional activator activity in yeast. Required for the multiplication of the rice dwarf virus (RDV). This Oryza sativa subsp. japonica (Rice) protein is NAC domain-containing protein 54.